The chain runs to 118 residues: Large ribosomal subunit protein bL20c (118 aa).

This sequence belongs to the bacterial ribosomal protein bL20 family.

The protein resides in the plastid. It localises to the chloroplast. Its function is as follows. Binds directly to 23S ribosomal RNA and is necessary for the in vitro assembly process of the 50S ribosomal subunit. It is not involved in the protein synthesizing functions of that subunit. The polypeptide is Large ribosomal subunit protein bL20c (Gracilaria tenuistipitata var. liui (Red alga)).